The following is a 350-amino-acid chain: Arabinogalactan endo-beta-1,4-galactanase (350 aa).

Positions 1-16 are cleaved as a signal peptide; that stretch reads MFASLLLAALPLLTHA. N-linked (GlcNAc...) asparagine glycosylation occurs at N128. Catalysis depends on E152, which acts as the Proton donor. The Nucleophile role is filled by E262.

The protein belongs to the glycosyl hydrolase 53 family. In terms of processing, glycosylated.

It carries out the reaction The enzyme specifically hydrolyzes (1-&gt;4)-beta-D-galactosidic linkages in type I arabinogalactans.. The polypeptide is Arabinogalactan endo-beta-1,4-galactanase (gal1) (Aspergillus aculeatus).